The primary structure comprises 497 residues: Acetyl-coenzyme A carboxylase carboxyl transferase subunit beta, chloroplastic (497 aa).

The segment at 30-50 is disordered; the sequence is GPVENTTVNEDPTRNDTDKNI. The span at 40–50 shows a compositional bias: basic and acidic residues; sequence DPTRNDTDKNI. One can recognise a CoA carboxyltransferase N-terminal domain in the interval 230-497; the sequence is VQCECENCYG…FFPLNQNSIK (268 aa). The Zn(2+) site is built by cysteine 232, cysteine 237, cysteine 253, and cysteine 256. The C4-type zinc finger occupies 232–256; sequence CECENCYGVNYKKSLNSKMNICEQC.

Belongs to the AccD/PCCB family. In terms of assembly, acetyl-CoA carboxylase is a heterohexamer composed of biotin carboxyl carrier protein, biotin carboxylase and 2 subunits each of ACCase subunit alpha and ACCase plastid-coded subunit beta (accD). Zn(2+) serves as cofactor.

It localises to the plastid. The protein resides in the chloroplast stroma. The enzyme catalyses N(6)-carboxybiotinyl-L-lysyl-[protein] + acetyl-CoA = N(6)-biotinyl-L-lysyl-[protein] + malonyl-CoA. It participates in lipid metabolism; malonyl-CoA biosynthesis; malonyl-CoA from acetyl-CoA: step 1/1. Its function is as follows. Component of the acetyl coenzyme A carboxylase (ACC) complex. Biotin carboxylase (BC) catalyzes the carboxylation of biotin on its carrier protein (BCCP) and then the CO(2) group is transferred by the transcarboxylase to acetyl-CoA to form malonyl-CoA. The sequence is that of Acetyl-coenzyme A carboxylase carboxyl transferase subunit beta, chloroplastic from Gossypium hirsutum (Upland cotton).